A 223-amino-acid polypeptide reads, in one-letter code: UPF0441 protein YgiB (223 aa).

Residues 178-195 (TVPKTAMAPKPATTTTVT) are compositionally biased toward low complexity. A disordered region spans residues 178–223 (TVPKTAMAPKPATTTTVTRGGFGESVAKQSTMQRSAAGTSTRSMGG). The span at 204–223 (AKQSTMQRSAAGTSTRSMGG) shows a compositional bias: polar residues.

It belongs to the UPF0441 family.

The sequence is that of UPF0441 protein YgiB from Salmonella paratyphi B (strain ATCC BAA-1250 / SPB7).